A 389-amino-acid chain; its full sequence is Agamous-like MADS-box protein AGL65 (389 aa).

The MADS-box domain occupies 1 to 61 (MGRVKLKIKR…GRATAFHGEH (61 aa)). 2 coiled-coil regions span residues 77–131 (QERT…LMEC) and 293–325 (GMEEDQEKKIKSEMELNNLQQQQQQQQQQQQQD). Residues 310–343 (NLQQQQQQQQQQQQQDPSMYDPMANNNGGCFQIP) form a disordered region. The span at 312-324 (QQQQQQQQQQQQQ) shows a compositional bias: low complexity.

In terms of assembly, forms a heterodimer with AGL104. Expressed in pollen.

Its subcellular location is the nucleus. Its function is as follows. Probable transcription factor that forms a heterodimer with the MADS-box protein AGL104 and is involved in the regulation of pollen maturation at the late stages of pollen development and pollen tube growth. The sequence is that of Agamous-like MADS-box protein AGL65 from Arabidopsis thaliana (Mouse-ear cress).